The sequence spans 430 residues: tRNA(Ile)-lysidine synthase (430 aa).

27–32 lines the ATP pocket; the sequence is SGGSDS.

It belongs to the tRNA(Ile)-lysidine synthase family.

It is found in the cytoplasm. The catalysed reaction is cytidine(34) in tRNA(Ile2) + L-lysine + ATP = lysidine(34) in tRNA(Ile2) + AMP + diphosphate + H(+). Its function is as follows. Ligates lysine onto the cytidine present at position 34 of the AUA codon-specific tRNA(Ile) that contains the anticodon CAU, in an ATP-dependent manner. Cytidine is converted to lysidine, thus changing the amino acid specificity of the tRNA from methionine to isoleucine. In Rickettsia prowazekii (strain Madrid E), this protein is tRNA(Ile)-lysidine synthase.